The following is a 219-amino-acid chain: Probable transaldolase (219 aa).

K83 (schiff-base intermediate with substrate) is an active-site residue.

It belongs to the transaldolase family. Type 3B subfamily.

The protein localises to the cytoplasm. The enzyme catalyses D-sedoheptulose 7-phosphate + D-glyceraldehyde 3-phosphate = D-erythrose 4-phosphate + beta-D-fructose 6-phosphate. It participates in carbohydrate degradation; pentose phosphate pathway; D-glyceraldehyde 3-phosphate and beta-D-fructose 6-phosphate from D-ribose 5-phosphate and D-xylulose 5-phosphate (non-oxidative stage): step 2/3. Functionally, transaldolase is important for the balance of metabolites in the pentose-phosphate pathway. In Cereibacter sphaeroides (strain ATCC 17029 / ATH 2.4.9) (Rhodobacter sphaeroides), this protein is Probable transaldolase.